Here is a 497-residue protein sequence, read N- to C-terminus: Glycerol kinase (497 aa).

An ADP-binding site is contributed by threonine 12. Positions 12, 13, and 14 each coordinate ATP. A sn-glycerol 3-phosphate-binding site is contributed by threonine 12. Arginine 16 contacts ADP. Residues arginine 82, glutamate 83, tyrosine 134, and aspartate 243 each coordinate sn-glycerol 3-phosphate. Glycerol-binding residues include arginine 82, glutamate 83, tyrosine 134, aspartate 243, and glutamine 244. Residues threonine 265 and glycine 308 each coordinate ADP. ATP contacts are provided by threonine 265, glycine 308, glutamine 312, and glycine 411. Glycine 411 serves as a coordination point for ADP.

Belongs to the FGGY kinase family.

It carries out the reaction glycerol + ATP = sn-glycerol 3-phosphate + ADP + H(+). It participates in polyol metabolism; glycerol degradation via glycerol kinase pathway; sn-glycerol 3-phosphate from glycerol: step 1/1. Its activity is regulated as follows. Inhibited by fructose 1,6-bisphosphate (FBP). Its function is as follows. Key enzyme in the regulation of glycerol uptake and metabolism. Catalyzes the phosphorylation of glycerol to yield sn-glycerol 3-phosphate. This Sinorhizobium fredii (strain NBRC 101917 / NGR234) protein is Glycerol kinase.